The following is a 182-amino-acid chain: Large ribosomal subunit protein uL5 (182 aa).

The protein belongs to the universal ribosomal protein uL5 family. Part of the 50S ribosomal subunit; part of the 5S rRNA/L5/L18/L25 subcomplex. Contacts the 5S rRNA and the P site tRNA. Forms a bridge to the 30S subunit in the 70S ribosome.

In terms of biological role, this is one of the proteins that bind and probably mediate the attachment of the 5S RNA into the large ribosomal subunit, where it forms part of the central protuberance. In the 70S ribosome it contacts protein S13 of the 30S subunit (bridge B1b), connecting the 2 subunits; this bridge is implicated in subunit movement. Contacts the P site tRNA; the 5S rRNA and some of its associated proteins might help stabilize positioning of ribosome-bound tRNAs. The polypeptide is Large ribosomal subunit protein uL5 (Leptospira interrogans serogroup Icterohaemorrhagiae serovar copenhageni (strain Fiocruz L1-130)).